The primary structure comprises 147 residues: uncharacterized protein (147 aa).

2 helical membrane-spanning segments follow: residues 42 to 62 and 64 to 84; these read WASL…SPEP and LILQ…ATAF.

The protein localises to the cell membrane. This is an uncharacterized protein from Bacillus subtilis (strain 168).